The chain runs to 725 residues: DNA replication licensing factor MCM7 (725 aa).

Positions 333–538 constitute an MCM domain; the sequence is IYNKLARSLA…METDLEMARH (206 aa). Residue 383–390 coordinates ATP; sequence GDPGVAKS. Residues 515–518 carry the Arginine finger motif; that stretch reads SRFD.

This sequence belongs to the MCM family. In terms of assembly, component of the minichromosome maintenance (MCM) complex, a heterotetramer composed of MCM2, MCM3, MCM4, MCM5, MCM6 and MCM7.

The protein localises to the nucleus. The catalysed reaction is ATP + H2O = ADP + phosphate + H(+). In terms of biological role, probable component of the MCM2-7 complex (MCM complex) that may function as a DNA helicase and which is essential to undergo a single round of replication initiation and elongation per cell cycle in eukaryotic cells. This chain is DNA replication licensing factor MCM7 (MCM7), found in Oryza sativa subsp. indica (Rice).